Here is a 207-residue protein sequence, read N- to C-terminus: LexA repressor (207 aa).

A DNA-binding region (H-T-H motif) is located at residues 28–48; the sequence is VREIGEAVGLASSSTVHGHLA. Catalysis depends on for autocatalytic cleavage activity residues S129 and K167.

The protein belongs to the peptidase S24 family. In terms of assembly, homodimer.

It catalyses the reaction Hydrolysis of Ala-|-Gly bond in repressor LexA.. In terms of biological role, represses a number of genes involved in the response to DNA damage (SOS response), including recA and lexA. In the presence of single-stranded DNA, RecA interacts with LexA causing an autocatalytic cleavage which disrupts the DNA-binding part of LexA, leading to derepression of the SOS regulon and eventually DNA repair. In Geobacillus kaustophilus (strain HTA426), this protein is LexA repressor.